A 101-amino-acid polypeptide reads, in one-letter code: Antiviral protein CAP (101 aa).

Has antiviral activity against tobacco mosaic virus and antitumor activity. The sequence is that of Antiviral protein CAP from Coprinus comatus (Shaggy mane).